A 584-amino-acid polypeptide reads, in one-letter code: Mitochondrial sodium/calcium exchanger protein (584 aa).

A signal peptide spans 1-26; that stretch reads MAGRRLNLRWALSVLCVLLMAETVSG. The Extracellular segment spans residues 27-95; sequence TRGSSTGAHI…GIFCHFPPSL (69 aa). An N-linked (GlcNAc...) asparagine glycan is attached at Asn60. The chain crosses the membrane as a helical span at residues 96 to 116; it reads LPLAVTLYVSWLLYLFLILGV. Topologically, residues 117–140 are cytoplasmic; that stretch reads TAAKFFCPNLSAISTTLKLSHNVA. A helical transmembrane segment spans residues 141–161; the sequence is GVTFLAFGNGAPDIFSALVAF. At 162–168 the chain is on the extracellular side; sequence SDPHTAG. The chain crosses the membrane as a helical span at residues 169–189; sequence LALGALFGAGVLVTTVVAGGI. Over 190-200 the chain is Cytoplasmic; that stretch reads TILHPFMAASR. Residues 201–221 form a helical membrane-spanning segment; that stretch reads PFFRDIVFYMVAVFLTFLMLF. Over 222-226 the chain is Extracellular; it reads RGRVT. The chain crosses the membrane as a helical span at residues 227–247; sequence LAWALGYLGLYVFYVVTVILC. Residues 248–325 are Cytoplasmic-facing; that stretch reads TWIYQRQRRG…KWRRKSAYWK (78 aa). Ser258 carries the phosphoserine; by PKA modification. Residues 326 to 346 form a helical membrane-spanning segment; that stretch reads ALKVFKLPVEFLLLLTVPVVD. At 347–360 the chain is on the extracellular side; sequence PDKDDQNWKRPLNC. A helical transmembrane segment spans residues 361-381; sequence LHLVISPLVVVLTLQSGTYGV. At 382–383 the chain is on the cytoplasmic side; it reads YE. The chain crosses the membrane as a helical span at residues 384–404; the sequence is IGGLVPVWVVVVIAGTALASV. At 405 to 416 the chain is on the extracellular side; that stretch reads TFFATSDSQPPR. A helical transmembrane segment spans residues 417 to 437; that stretch reads LHWLFAFLGFLTSALWINAAA. Residues 438–445 lie on the Cytoplasmic side of the membrane; the sequence is TEVVNILR. A helical membrane pass occupies residues 446 to 466; that stretch reads SLGVVFRLSNTVLGLTLLAWG. The Extracellular segment spans residues 467–487; that stretch reads NSIGDAFSDFTLARQGYPRMA. Residues 488-508 form a helical membrane-spanning segment; sequence FSACFGGIIFNILVGVGLGCL. The Cytoplasmic portion of the chain corresponds to 509–524; the sequence is LQISRSHTEVKLEPDG. A helical membrane pass occupies residues 525 to 545; it reads LLVWVLAGALGLSLVFSLVSV. Topologically, residues 546–558 are extracellular; sequence PLQCFQLSRVYGF. Residues 559–579 traverse the membrane as a helical segment; it reads CLLLFYLNFLVVALLTEFGVI. The Cytoplasmic segment spans residues 580–584; sequence HLKSM.

Belongs to the Ca(2+):cation antiporter (CaCA) (TC 2.A.19) family. SLC24A subfamily. Post-translationally, phosphorylation at Ser-258 by PKA prevents calcium overload. Present in pancreatic beta-cells (at protein level).

It is found in the mitochondrion inner membrane. The catalysed reaction is Ca(2+)(in) + 3 Na(+)(out) = Ca(2+)(out) + 3 Na(+)(in). The enzyme catalyses 3 Li(+)(out) + Ca(2+)(in) = 3 Li(+)(in) + Ca(2+)(out). Its activity is regulated as follows. Inhibited by the sodium/calcium exchanger inhibitor CGP-37157. Strongly inhibited by zinc. Mitochondrial sodium/calcium antiporter that mediates sodium-dependent calcium efflux from mitochondrion, by mediating the exchange of 3 sodium ions per 1 calcium ion. Plays a central role in mitochondrial calcium homeostasis by mediating mitochondrial calcium extrusion: calcium efflux is essential for mitochondrial function and cell survival, notably in cardiomyocytes. Regulates rates of glucose-dependent insulin secretion in pancreatic beta-cells during the first phase of insulin secretion: acts by mediating efflux of calcium from mitochondrion, thereby affecting cytoplasmic calcium responses. Required for store-operated Ca(2+) entry (SOCE) and Ca(2+) release-activated Ca(2+) (CRAC) channel regulation: sodium transport by SLC8B1 leads to promote calcium-shuttling that modulates mitochondrial redox status, thereby regulating SOCE activity. Involved in B-lymphocyte chemotaxis. Able to transport Ca(2+) in exchange of either Li(+) or Na(+), explaining how Li(+) catalyzes Ca(2+) exchange. In contrast to other members of the family its function is independent of K(+). The polypeptide is Mitochondrial sodium/calcium exchanger protein (Homo sapiens (Human)).